Consider the following 899-residue polypeptide: Protein translocase subunit SecA (899 aa).

ATP is bound by residues Gln-87, 105-109 (GEGKT), and Asp-512. The interval 846–899 (MEEEQQQQAQKKIVFNLGEEPATAPQPARSKKSASRNDPCPCGSGKKYKKCCGK) is disordered. Zn(2+) is bound by residues Cys-885, Cys-887, Cys-896, and Cys-897.

This sequence belongs to the SecA family. In terms of assembly, monomer and homodimer. Part of the essential Sec protein translocation apparatus which comprises SecA, SecYEG and auxiliary proteins SecDF-YajC and YidC. The cofactor is Zn(2+).

The protein localises to the cell inner membrane. It is found in the cytoplasm. It carries out the reaction ATP + H2O + cellular proteinSide 1 = ADP + phosphate + cellular proteinSide 2.. Its function is as follows. Part of the Sec protein translocase complex. Interacts with the SecYEG preprotein conducting channel. Has a central role in coupling the hydrolysis of ATP to the transfer of proteins into and across the cell membrane, serving as an ATP-driven molecular motor driving the stepwise translocation of polypeptide chains across the membrane. This chain is Protein translocase subunit SecA, found in Geobacter metallireducens (strain ATCC 53774 / DSM 7210 / GS-15).